The chain runs to 325 residues: DNA-directed RNA polymerase subunit alpha (325 aa).

Positions 1–231 (MQNSLLKPRI…DQLNVFAALE (231 aa)) are alpha N-terminal domain (alpha-NTD). An alpha C-terminal domain (alpha-CTD) region spans residues 246 to 325 (VDPILLRPVD…ENWPPAGLEK (80 aa)).

It belongs to the RNA polymerase alpha chain family. In terms of assembly, homodimer. The RNAP catalytic core consists of 2 alpha, 1 beta, 1 beta' and 1 omega subunit. When a sigma factor is associated with the core the holoenzyme is formed, which can initiate transcription.

It carries out the reaction RNA(n) + a ribonucleoside 5'-triphosphate = RNA(n+1) + diphosphate. Functionally, DNA-dependent RNA polymerase catalyzes the transcription of DNA into RNA using the four ribonucleoside triphosphates as substrates. This Herminiimonas arsenicoxydans protein is DNA-directed RNA polymerase subunit alpha.